The primary structure comprises 309 residues: Malate dehydrogenase (309 aa).

NAD(+) is bound by residues 9-14 and D33; that span reads GAGFVG. Substrate-binding residues include R82 and R88. NAD(+)-binding positions include N95 and 118–120; that span reads VNN. N120 and R151 together coordinate substrate. The Proton acceptor role is filled by H175.

The protein belongs to the LDH/MDH superfamily. MDH type 3 family.

It carries out the reaction (S)-malate + NAD(+) = oxaloacetate + NADH + H(+). Functionally, catalyzes the reversible oxidation of malate to oxaloacetate. The protein is Malate dehydrogenase of Chloroflexus aurantiacus (strain ATCC 29364 / DSM 637 / Y-400-fl).